Reading from the N-terminus, the 498-residue chain is Pyridine nucleotide-disulfide oxidoreductase domain-containing protein 1 (498 aa).

An N-acetylmethionine modification is found at Met-1.

It belongs to the class-I pyridine nucleotide-disulfide oxidoreductase family. PYROXD1 subfamily. Requires FAD as cofactor.

It localises to the nucleus. Its subcellular location is the cytoplasm. The protein resides in the myofibril. The protein localises to the sarcomere. In terms of biological role, probable FAD-dependent oxidoreductase; involved in the cellular oxidative stress response. Required for normal sarcomere structure and muscle fiber integrity. The chain is Pyridine nucleotide-disulfide oxidoreductase domain-containing protein 1 (Pyroxd1) from Rattus norvegicus (Rat).